The chain runs to 169 residues: MQDAITAILNRYDLTGRYLDKAAVTQLESFFSSGLDRIKIAEIINNQATNILKEASAQLYEEQPELLRPGGNSYTTRRYAACLRDIEYYLRYTSYALIAGNTNILDQRVLNGLKDTYNSLSVPLAPTVRSIQLLQEIIEEELELQSITRKDIVQEPFQHLINALSEQDL.

N72 is subject to N4-methylasparagine. C82 contacts (2R,3E)-phycocyanobilin.

It belongs to the phycobiliprotein family. In terms of assembly, heterodimer of an alpha and a beta chain. Contains one covalently linked bilin chromophore.

Its subcellular location is the plastid. It is found in the chloroplast thylakoid membrane. Functionally, light-harvesting photosynthetic bile pigment-protein from the phycobiliprotein complex. Allophycocyanin has a maximum absorption at approximately 650 nanometers. The chain is Allophycocyanin subunit beta-18 (apcF) from Porphyra purpurea (Red seaweed).